The primary structure comprises 63 residues: H/ACA ribonucleoprotein complex subunit 3-like protein (63 aa).

The interval 18 to 40 (KMDPEGKPTLSAHPARFSPDDKY) is disordered.

The protein belongs to the NOP10 family. In terms of assembly, component of the small nucleolar ribonucleoprotein particles containing H/ACA-type snoRNAs (H/ACA snoRNPs).

It is found in the nucleus. The protein localises to the nucleolus. Its function is as follows. Required for ribosome biogenesis. Part of a complex which catalyzes pseudouridylation of rRNA. This involves the isomerization of uridine such that the ribose is subsequently attached to C5, instead of the normal N1. Pseudouridine ('psi') residues may serve to stabilize the conformation of rRNAs. The chain is H/ACA ribonucleoprotein complex subunit 3-like protein from Trypanosoma cruzi.